Reading from the N-terminus, the 261-residue chain is Putative hydro-lyase Nther_1142 (261 aa).

Belongs to the D-glutamate cyclase family.

The protein is Putative hydro-lyase Nther_1142 of Natranaerobius thermophilus (strain ATCC BAA-1301 / DSM 18059 / JW/NM-WN-LF).